We begin with the raw amino-acid sequence, 1183 residues long: 3-hydroxy-3-methylglutaryl-coenzyme A reductase (1183 aa).

At 1-245 (MAAILLPQRF…DLLKNAETLD (245 aa)) the chain is on the cytoplasmic side. The region spanning 245 to 426 (DIVIMLLGYI…FTFYTAILSI (182 aa)) is the SSD domain. Residues 246-266 (IVIMLLGYIAMHLTFVSLFLS) form a helical membrane-spanning segment. Residues 267-273 (MRKMGSK) are Lumenal-facing. Residues 274-294 (FWLGICTLFSSVFAFLFGLVV) traverse the membrane as a helical segment. The Cytoplasmic segment spans residues 295-299 (TTKLG). Residues 300–320 (VPISVILLSEGLPFLVVTIGF) traverse the membrane as a helical segment. Over 321-378 (EKNIVLTRAVMSHAIEHRRIQAQNSKSGKRSPERSTQNMIQYAVQAAIKEKGFEIIRD) the chain is Lumenal. A helical transmembrane segment spans residues 379–399 (YAIEIVILVIGAASGVQGGLQ). Over 400–402 (QFC) the chain is Cytoplasmic. A helical membrane pass occupies residues 403–423 (FLAAWTLFFDFILLFTFYTAI). Residues 424-482 (LSIKLEINRIKRHVDMRMALEDDGVSRRVAENVAKGDDELNRVRGDAPLFGRKSSSIPK) are Lumenal-facing. The chain crosses the membrane as a helical span at residues 483-503 (FKVLMILGFIFVNIVNICSIP). Residues 504–1183 (FRNPSSMSTI…SAAAIQRSKR (680 aa)) are Cytoplasmic-facing. The active-site Charge relay system is Glu828. 834-840 (SASRGCK) lines the CoA pocket. NADP(+) contacts are provided by residues 895–897 (SRF) and 922–930 (DAMGMNMIS). Catalysis depends on Lys962, which acts as the Charge relay system. 991-993 (VLK) is a CoA binding site. Residue Asp1038 is the Charge relay system of the active site. A CoA-binding site is contributed by 1133–1134 (AH). The Proton donor role is filled by His1134. Residues 1136–1183 (QHNRSAAPSRSTTPAPPMTPVSLAMTSAQERSASTTSMSAAAIQRSKR) form a disordered region. Residue 1138–1139 (NR) coordinates NADP(+). Low complexity-rich tracts occupy residues 1139-1148 (RSAAPSRSTT) and 1167-1177 (SASTTSMSAAA).

The protein belongs to the HMG-CoA reductase family.

The protein localises to the endoplasmic reticulum membrane. It catalyses the reaction (R)-mevalonate + 2 NADP(+) + CoA = (3S)-3-hydroxy-3-methylglutaryl-CoA + 2 NADPH + 2 H(+). It participates in metabolic intermediate biosynthesis; (R)-mevalonate biosynthesis; (R)-mevalonate from acetyl-CoA: step 3/3. HMG-CoA reductase; part of the first module of ergosterol biosynthesis pathway that includes the early steps of the pathway, conserved across all eukaryotes, and which results in the formation of mevalonate from acetyl-coenzyme A (acetyl-CoA). In this module, the cytosolic acetyl-CoA acetyltransferase catalyzes the formation of acetoacetyl-CoA. The hydroxymethylglutaryl-CoA synthase then condenses acetyl-CoA with acetoacetyl-CoA to form HMG-CoA. The rate-limiting step of the early module is the reduction to mevalonate by the 3-hydroxy-3-methylglutaryl-coenzyme A (HMG-CoA) reductase HMGR. The polypeptide is 3-hydroxy-3-methylglutaryl-coenzyme A reductase (HMGR) (Gibberella fujikuroi (strain CBS 195.34 / IMI 58289 / NRRL A-6831) (Bakanae and foot rot disease fungus)).